We begin with the raw amino-acid sequence, 464 residues long: Argininosuccinate lyase (464 aa).

Belongs to the lyase 1 family. Argininosuccinate lyase subfamily.

It is found in the cytoplasm. It catalyses the reaction 2-(N(omega)-L-arginino)succinate = fumarate + L-arginine. It participates in amino-acid biosynthesis; L-arginine biosynthesis; L-arginine from L-ornithine and carbamoyl phosphate: step 3/3. The polypeptide is Argininosuccinate lyase (Azotobacter vinelandii (strain DJ / ATCC BAA-1303)).